We begin with the raw amino-acid sequence, 1682 residues long: MSQDPERDDVTASATASASASAPASASAHYSGSSLSVRWVQGFPSQNVHFVNDQTICYPSGNFVIFINLETKKKTVLQCINGIVGVMATNVPSEVVAFSDRRFKPVIYIYSFPSLTRKNKLKGDILLDYTLLCFSYCGTYLASYSSLPEFELALWNWEASAILCKKSNPGMDVSQMSFNPMNWHQMCLSSSSAMSVWTIERSNQEHHFRIRSVKLPLEDATFLNEPDMLFPTTLPKDLIYGPVLPLSAIAGLVGEEAETFRPKDDIYPLLHPTMHCWTPSSDLYVGCEEGHLLMINTETLKVTVLQKAEEFPLPDGAPLINPLTLVYQKDGILASGIDGVIYSFIIKDSKYQVKTFLEFDGPVTHLVFSPSYKMLLIQTDKGSVYIYTFGAEMPLDKLLDACDGKVQAVSFITPGTKYFLTLTSSGEVSTVSLEDCNCTSRIFLKTQATALACSPSSPTAAVGTVDGYVYFLNILDVESPQMIHQAFLSQSPVKIVTYDQRGIFLLVGTEEGNIFVIDARPSKSFQIFGFTETGKDILQISTVSVMESDVVEVLVLYPLPDMGRSRLEYFTLPVMLPEVVPENFSDERGRLKDDLTHKYLYEVEHTLSSAVLGFTGSKIFGFCSQVPYICSYVMPVKEHTGVLVLKPHQKVQSKQYGSGTIYLSSHGLWLMTIAKCGILCIRDMFSMETFVRCRSHSHQGRGIQNMKMSLDGQHILVNGKDDNTLVCLKWKRLGANIASEIFEHSRPLVLHLSQTVESESVYLALSRESTNEQQEETTESQKHLNSDSSEEEAVIDHKMIPWIQQKMEEAIKKEVRIFSPRRKEIKRGIKELAQVIAMMMEENEKVDIIAKLDEQEFCLDADELERLHDECEEEVAKIRKDVEMHNLAQSYLTELIKEECWNSMAVKGRALKCFHIPYVVDNFPMKERTEEELQELSKVMQQKKTEIECLKLRKEIVEVQATTTIAKKHHEEEEEEEEDEERTIKTTSLPNYLLGSLSTDFGADTSLLTSQLDLHSREEKINQIILLKDIIYNIKRNFNSEFDAAYKQKEIEIARVKEKNVRIAEIISDLELEETVWQPVFEDSEKPERALVVEDDEISFKKYIAPWQRAKIKEVVSTYEMERLQQARISDERQRGLMDMMGGVLEVKKEDILRMVIPQPPFMAKADALWSEDERKQFKEYEKKVKELNEERDKYRKSLEAELKKLQNSIQESTQNFDDHLKRLFERRVKAEMVINQEELKINNIIFSLLLDEELSSREQFLNNYLLKKQEEKTKTAEAIQKAREDLDVFKEHHDMLVAEDKILDRSFKKEFSDILGHQVDVLYKLFKRRPRVHKQKTQADVTSLVPYGERPGSAKLNKENLAQLMKSMDELDNINNMPEGLDPSVWEHFCSTRRAKVENEYKVKQKAACLLEMTTFLRKRMEEDDVVHHEIEKVFHELIRLQDEKVRFQVNLTVQILLKQGQVELENFQLMLEYSDAILINKNIIEDLNSVIRTQGQKKVASMMESKEVHKGIYQIEWEHKKMEMEMEDLNQRAWDIEMLFFSRDRQKYLNEPNYENVIAIQIGIMEQTISVIDKTHKKNVENCKKLLKKLGKYSNQKDVANYTLSCNLREELVAVSERQDICNEIGSKLTCEKIARERYDNQLKQQKLLNISKQQAEQISILQAEVERLRMKTFPALIPM.

WD repeat units follow at residues 168 to 207 (NPGM…QEHH), 262 to 305 (PKDD…VTVL), 315 to 354 (DGAP…YQVK), 358 to 397 (EFDG…PLDK), 488 to 527 (LSQS…SFQI), and 697 to 738 (SHQG…ANIA). Positions 767–790 (RESTNEQQEETTESQKHLNSDSSE) are disordered. Coiled coils occupy residues 926 to 960 (KERT…VEVQ) and 1171 to 1223 (SEDE…HLKR).

The protein belongs to the CFAP43 family. As to expression, expressed in testis. Expressed in the lung, brain, oviduct and nasal cavity.

It is found in the cell projection. The protein localises to the cilium. It localises to the flagellum. The protein resides in the cytoplasm. Its subcellular location is the cytoskeleton. It is found in the flagellum axoneme. The protein localises to the cilium axoneme. Functionally, flagellar protein involved in sperm flagellum axoneme organization and function. Involved in the regulation of the beating frequency of motile cilia on the epithelial cells of the respiratory tract. This chain is Cilia- and flagella-associated protein 43, found in Mus musculus (Mouse).